We begin with the raw amino-acid sequence, 261 residues long: tRNA pseudouridine synthase A (261 aa).

D51 acts as the Nucleophile in catalysis. Substrate is bound at residue Y109.

Belongs to the tRNA pseudouridine synthase TruA family. As to quaternary structure, homodimer.

It catalyses the reaction uridine(38/39/40) in tRNA = pseudouridine(38/39/40) in tRNA. In terms of biological role, formation of pseudouridine at positions 38, 39 and 40 in the anticodon stem and loop of transfer RNAs. The polypeptide is tRNA pseudouridine synthase A (Tolumonas auensis (strain DSM 9187 / NBRC 110442 / TA 4)).